The primary structure comprises 523 residues: Alanine aminotransferase 2 (523 aa).

The tract at residues 1–25 is disordered; it reads MQRAAALVRRGCGPRTPSSWGRSQS. Pyridoxal 5'-phosphate contacts are provided by Ala187, Ser188, Tyr216, Asn271, and Ser338. At Lys341 the chain carries N6-(pyridoxal phosphate)lysine. Arg350 contributes to the pyridoxal 5'-phosphate binding site. An N6-acetyllysine mark is found at Lys415, Lys505, and Lys512.

Belongs to the class-I pyridoxal-phosphate-dependent aminotransferase family. Alanine aminotransferase subfamily. As to quaternary structure, homodimer. Pyridoxal 5'-phosphate serves as cofactor. In terms of tissue distribution, expressed at high levels in muscle, adipose tissue, kidney and brain and at lower levels in the liver and breast.

It catalyses the reaction L-alanine + 2-oxoglutarate = pyruvate + L-glutamate. It participates in amino-acid degradation; L-alanine degradation via transaminase pathway; pyruvate from L-alanine: step 1/1. Functionally, catalyzes the reversible transamination between alanine and 2-oxoglutarate to form pyruvate and glutamate. The chain is Alanine aminotransferase 2 (GPT2) from Homo sapiens (Human).